The chain runs to 123 residues: UPF0102 protein APJL_1381 (123 aa).

The protein belongs to the UPF0102 family.

This is UPF0102 protein APJL_1381 from Actinobacillus pleuropneumoniae serotype 3 (strain JL03).